The primary structure comprises 488 residues: Ribulose bisphosphate carboxylase large chain (488 aa).

Substrate contacts are provided by Asn127 and Thr177. The Proton acceptor role is filled by Lys179. Position 181 (Lys181) interacts with substrate. Mg(2+) contacts are provided by Lys205, Asp207, and Glu208. Lys205 is subject to N6-carboxylysine. His297 acts as the Proton acceptor in catalysis. Substrate contacts are provided by Arg298, His330, and Ser382.

Belongs to the RuBisCO large chain family. Type I subfamily. Heterohexadecamer of 8 large chains and 8 small chains. Mg(2+) serves as cofactor.

Its subcellular location is the plastid. The protein resides in the chloroplast. The catalysed reaction is 2 (2R)-3-phosphoglycerate + 2 H(+) = D-ribulose 1,5-bisphosphate + CO2 + H2O. It carries out the reaction D-ribulose 1,5-bisphosphate + O2 = 2-phosphoglycolate + (2R)-3-phosphoglycerate + 2 H(+). In terms of biological role, ruBisCO catalyzes two reactions: the carboxylation of D-ribulose 1,5-bisphosphate, the primary event in carbon dioxide fixation, as well as the oxidative fragmentation of the pentose substrate in the photorespiration process. Both reactions occur simultaneously and in competition at the same active site. The chain is Ribulose bisphosphate carboxylase large chain from Gracilaria tenuistipitata var. liui (Red alga).